The sequence spans 359 residues: Cysteine/Cysteine sulfinic acid decarboxylase (359 aa).

The protein in the N-terminal section; belongs to the HFCD (homo-oligomeric flavin containing Cys decarboxylase) superfamily. This sequence in the C-terminal section; belongs to the PPC synthetase family.

It catalyses the reaction L-cysteine + H(+) = cysteamine + CO2. The enzyme catalyses 3-sulfino-L-alanine + H(+) = hypotaurine + CO2. Its activity is regulated as follows. Slightly stimulated in the presence of 1 mM Mg(2+). In terms of biological role, catalyzes the decarboxylation of L-cysteine to cysteamine and of 3-sulfino-L-alanine (cysteine sulfinic acid) to hypotaurine. Also catalyzes the decarboxylation of various amino acids such as L-lysine, L-glutamate, L-asparaginate and L-proline. In vitro, shows highest activity with L-cysteine as substrate. The sequence is that of Cysteine/Cysteine sulfinic acid decarboxylase from Unknown prokaryotic organism.